The chain runs to 215 residues: Probable transaldolase 1 (215 aa).

The active-site Schiff-base intermediate with substrate is the Lys-83.

It belongs to the transaldolase family. Type 3B subfamily.

It is found in the cytoplasm. The catalysed reaction is D-sedoheptulose 7-phosphate + D-glyceraldehyde 3-phosphate = D-erythrose 4-phosphate + beta-D-fructose 6-phosphate. The protein operates within carbohydrate degradation; pentose phosphate pathway; D-glyceraldehyde 3-phosphate and beta-D-fructose 6-phosphate from D-ribose 5-phosphate and D-xylulose 5-phosphate (non-oxidative stage): step 2/3. Its function is as follows. Transaldolase is important for the balance of metabolites in the pentose-phosphate pathway. The protein is Probable transaldolase 1 of Bacillus anthracis.